A 379-amino-acid polypeptide reads, in one-letter code: Tryptophan 2,3-dioxygenase (379 aa).

Residues 57-61 and Arg128 contribute to the substrate site; that span reads FIITH. His312 contributes to the heme binding site. Thr327 lines the substrate pocket.

Belongs to the tryptophan 2,3-dioxygenase family. Homotetramer. Dimer of dimers. Heme is required as a cofactor.

The enzyme catalyses L-tryptophan + O2 = N-formyl-L-kynurenine. The protein operates within amino-acid degradation; L-tryptophan degradation via kynurenine pathway; L-kynurenine from L-tryptophan: step 1/2. It functions in the pathway pigment biosynthesis; ommochrome biosynthesis. Functionally, heme-dependent dioxygenase that catalyzes the oxidative cleavage of the L-tryptophan (L-Trp) pyrrole ring and converts L-tryptophan to N-formyl-L-kynurenine. Catalyzes the oxidative cleavage of the indole moiety. This Drosophila erecta (Fruit fly) protein is Tryptophan 2,3-dioxygenase.